Reading from the N-terminus, the 1177-residue chain is Putative ATP-dependent RNA helicase TDRD12 (1177 aa).

The region spanning threonine 56 to leucine 118 is the Tudor 1 domain. The region spanning tryptophan 447–valine 635 is the Helicase ATP-binding domain. ATP is bound at residue serine 460–leucine 467. The DEAH box motif lies at aspartate 574 to glutamate 577. In terms of domain architecture, Tudor 2 spans isoleucine 900–phenylalanine 999. The disordered stretch occupies residues glutamate 1098–arginine 1177. The span at serine 1100–glutamine 1115 shows a compositional bias: polar residues.

Component of a mRNP complex containing PIWIL2, TDRD1 and piRNAs. Component of the PET complex, at least composed of EXD1, PIWIL2, TDRD12 and piRNAs.

It carries out the reaction ATP + H2O = ADP + phosphate + H(+). Functionally, probable ATP-binding RNA helicase required during spermatogenesis to repress transposable elements and preventing their mobilization, which is essential for the germline integrity. Acts via the piRNA metabolic process, which mediates the repression of transposable elements during meiosis by forming complexes composed of piRNAs and Piwi proteins and governs the methylation and subsequent repression of transposons. Involved in the secondary piRNAs metabolic process. Acts via the PET complex, a multiprotein complex required during the secondary piRNAs metabolic process for the PIWIL2 slicing-triggered loading of PIWIL4 piRNAs. This Homo sapiens (Human) protein is Putative ATP-dependent RNA helicase TDRD12 (TDRD12).